The chain runs to 96 residues: Large ribosomal subunit protein bL28 (96 aa).

The protein belongs to the bacterial ribosomal protein bL28 family.

The polypeptide is Large ribosomal subunit protein bL28 (Agrobacterium fabrum (strain C58 / ATCC 33970) (Agrobacterium tumefaciens (strain C58))).